The sequence spans 214 residues: Large ribosomal subunit protein bL25 (214 aa).

A disordered region spans residues 193–214 (PRAAAEEEDTGAEGDVEAADAE). Over residues 198-214 (EEEDTGAEGDVEAADAE) the composition is skewed to acidic residues.

The protein belongs to the bacterial ribosomal protein bL25 family. CTC subfamily. As to quaternary structure, part of the 50S ribosomal subunit; part of the 5S rRNA/L5/L18/L25 subcomplex. Contacts the 5S rRNA. Binds to the 5S rRNA independently of L5 and L18.

Its function is as follows. This is one of the proteins that binds to the 5S RNA in the ribosome where it forms part of the central protuberance. This Nitrosococcus oceani (strain ATCC 19707 / BCRC 17464 / JCM 30415 / NCIMB 11848 / C-107) protein is Large ribosomal subunit protein bL25.